Reading from the N-terminus, the 545-residue chain is Chaperonin GroEL 1 (545 aa).

Residues 30–33, Lys-51, 87–91, Gly-415, 479–481, and Asp-495 each bind ATP; these read TLGP, DGTTT, and NAA.

It belongs to the chaperonin (HSP60) family. As to quaternary structure, forms a cylinder of 14 subunits composed of two heptameric rings stacked back-to-back. Interacts with the co-chaperonin GroES.

It is found in the cytoplasm. It catalyses the reaction ATP + H2O + a folded polypeptide = ADP + phosphate + an unfolded polypeptide.. Its function is as follows. Together with its co-chaperonin GroES, plays an essential role in assisting protein folding. The GroEL-GroES system forms a nano-cage that allows encapsulation of the non-native substrate proteins and provides a physical environment optimized to promote and accelerate protein folding. In Methylococcus capsulatus (strain ATCC 33009 / NCIMB 11132 / Bath), this protein is Chaperonin GroEL 1.